We begin with the raw amino-acid sequence, 329 residues long: MVKTQRVVITPGEPAGIGPDLVVQLAQREWPVELVVCADATLLTDRAAMLGLPLTLRPYSPNSPAQPQTAGILTLLPVALRESVTAGQLAVENGHYVVETLARACDGCLNGEFAALITGPVHKGVINDAGIPFTGHTEFFEERSRAKKVVMMLATEELRVALATTHLPLRDIADAITPALLHEVIAILHHDLRTKFGIAEPRILVCGLNPHAGEGGHMGTEEIGTIIPVLDELRAQGMKLSGPLPADTLFQPKYLDNADAVLAMYHDQGLPVLKYQGFGRGVNITLGLPFIRTSVDHGTALELAGRGEADVGSFITALNLAIKMIVNTQ.

Substrate contacts are provided by His136 and Thr137. A divalent metal cation contacts are provided by His166, His211, and His266. Residues Lys274, Asn283, and Arg292 each contribute to the substrate site.

Belongs to the PdxA family. Homodimer. Requires Zn(2+) as cofactor. The cofactor is Mg(2+). It depends on Co(2+) as a cofactor.

Its subcellular location is the cytoplasm. It catalyses the reaction 4-(phosphooxy)-L-threonine + NAD(+) = 3-amino-2-oxopropyl phosphate + CO2 + NADH. It participates in cofactor biosynthesis; pyridoxine 5'-phosphate biosynthesis; pyridoxine 5'-phosphate from D-erythrose 4-phosphate: step 4/5. Catalyzes the NAD(P)-dependent oxidation of 4-(phosphooxy)-L-threonine (HTP) into 2-amino-3-oxo-4-(phosphooxy)butyric acid which spontaneously decarboxylates to form 3-amino-2-oxopropyl phosphate (AHAP). The chain is 4-hydroxythreonine-4-phosphate dehydrogenase from Shigella dysenteriae serotype 1 (strain Sd197).